The primary structure comprises 898 residues: Vacuolar membrane protease (898 aa).

Over Met1–Arg14 the chain is Cytoplasmic. The chain crosses the membrane as a helical span at residues Thr15 to Ile35. Residues Thr36–Pro342 are Vacuolar-facing. Asn50, Asn103, and Asn110 each carry an N-linked (GlcNAc...) asparagine glycan. Zn(2+) is bound by residues His139 and Asp151. Glu183 acts as the Proton acceptor in catalysis. Glu184 serves as a coordination point for Zn(2+). Asn200 carries an N-linked (GlcNAc...) asparagine glycan. The Zn(2+) site is built by Glu209 and His284. The helical transmembrane segment at Leu343–Val365 threads the bilayer. Residues Thr366 to Phe411 are Cytoplasmic-facing. A helical membrane pass occupies residues Trp412–Ile432. Position 433 (Asn433) is a topological domain, vacuolar. Residues Pro434–Leu454 form a helical membrane-spanning segment. At Ser455–Gln479 the chain is on the cytoplasmic side. Residues Ala480 to Gly500 traverse the membrane as a helical segment. Over Ala501–Tyr509 the chain is Vacuolar. A helical transmembrane segment spans residues Ile510–Leu530. Residues Leu531 to Ser593 lie on the Cytoplasmic side of the membrane. Residues Gly594–Val614 traverse the membrane as a helical segment. Residues Ser615–Ala635 lie on the Vacuolar side of the membrane. A helical membrane pass occupies residues Val636 to Phe656. Residues Ala657–Val664 lie on the Cytoplasmic side of the membrane. A helical transmembrane segment spans residues Ala665–Phe685. Residues Ser686–Val898 are Vacuolar-facing. 3 N-linked (GlcNAc...) asparagine glycosylation sites follow: Asn704, Asn733, and Asn764.

The protein belongs to the peptidase M28 family. The cofactor is Zn(2+).

Its subcellular location is the vacuole membrane. Functionally, may be involved in vacuolar sorting and osmoregulation. The protein is Vacuolar membrane protease of Schizophyllum commune (strain H4-8 / FGSC 9210) (Split gill fungus).